We begin with the raw amino-acid sequence, 608 residues long: Aspartate--tRNA(Asp/Asn) ligase (608 aa).

Position 175 (Glu175) interacts with L-aspartate. The tract at residues 199–202 (QLFK) is aspartate. Position 221 (Arg221) interacts with L-aspartate. ATP contacts are provided by residues 221–223 (RDE) and Gln230. His453 provides a ligand contact to L-aspartate. Glu487 provides a ligand contact to ATP. Arg494 contacts L-aspartate. 539–542 (GWDR) lines the ATP pocket. The tract at residues 566–608 (IDPLTDAPAAITPQQRKEAGIDAKPKPKAEAQAEAQAEESAEK) is disordered. Positions 580–596 (QRKEAGIDAKPKPKAEA) are enriched in basic and acidic residues.

The protein belongs to the class-II aminoacyl-tRNA synthetase family. Type 1 subfamily. Homodimer.

It localises to the cytoplasm. It catalyses the reaction tRNA(Asx) + L-aspartate + ATP = L-aspartyl-tRNA(Asx) + AMP + diphosphate. Its function is as follows. Aspartyl-tRNA synthetase with relaxed tRNA specificity since it is able to aspartylate not only its cognate tRNA(Asp) but also tRNA(Asn). Reaction proceeds in two steps: L-aspartate is first activated by ATP to form Asp-AMP and then transferred to the acceptor end of tRNA(Asp/Asn). The polypeptide is Aspartate--tRNA(Asp/Asn) ligase (Corynebacterium glutamicum (strain R)).